We begin with the raw amino-acid sequence, 558 residues long: Transcription termination factor MTEF18, mitochondrial (558 aa).

The transit peptide at 1-58 directs the protein to the mitochondrion; that stretch reads MFMVRLKFASISHNFSTVAAKHRRVPSKYKSLAIGKAQQAITDYLHTTRSLSYTHAEQ.

It belongs to the mTERF family.

Its subcellular location is the mitochondrion. Its function is as follows. Transcription termination factor involved in the regulation of mitochondrial-encoded gene expression. Essential for normal plant growth and development. This is Transcription termination factor MTEF18, mitochondrial from Arabidopsis thaliana (Mouse-ear cress).